A 505-amino-acid chain; its full sequence is Histidine ammonia-lyase (505 aa).

A cross-link (5-imidazolinone (Ala-Gly)) is located at residues Ala-144–Gly-146. Residue Ser-145 is modified to 2,3-didehydroalanine (Ser).

The protein belongs to the PAL/histidase family. Post-translationally, contains an active site 4-methylidene-imidazol-5-one (MIO), which is formed autocatalytically by cyclization and dehydration of residues Ala-Ser-Gly.

It is found in the cytoplasm. It catalyses the reaction L-histidine = trans-urocanate + NH4(+). The protein operates within amino-acid degradation; L-histidine degradation into L-glutamate; N-formimidoyl-L-glutamate from L-histidine: step 1/3. In Legionella pneumophila (strain Corby), this protein is Histidine ammonia-lyase.